Consider the following 840-residue polypeptide: Phosphatidylglycerol lysyltransferase (840 aa).

The Cytoplasmic segment spans residues Met-1–Lys-8. A helical membrane pass occupies residues Leu-9–Leu-29. The Extracellular segment spans residues Tyr-30–Trp-52. A helical transmembrane segment spans residues Leu-53–Ile-73. Topologically, residues Leu-74–Arg-89 are cytoplasmic. A helical transmembrane segment spans residues Val-90–Gly-110. At Val-111–Tyr-129 the chain is on the extracellular side. Residues Ile-130–Leu-150 form a helical membrane-spanning segment. Over Arg-151–Glu-161 the chain is Cytoplasmic. The helical transmembrane segment at Ile-162 to Tyr-182 threads the bilayer. Topologically, residues Thr-183–Thr-200 are extracellular. Residues Val-201–Val-221 traverse the membrane as a helical segment. Residues Asp-222–Thr-229 lie on the Cytoplasmic side of the membrane. A helical membrane pass occupies residues Phe-230–Phe-250. The Extracellular portion of the chain corresponds to Gly-251 to Lys-270. Residues Ile-271 to Leu-291 form a helical membrane-spanning segment. The Cytoplasmic portion of the chain corresponds to Ile-292 to Ser-337. The chain crosses the membrane as a helical span at residues Leu-338–Tyr-358. At Asp-359–His-366 the chain is on the extracellular side. A helical membrane pass occupies residues Phe-367–Val-387. The Cytoplasmic portion of the chain corresponds to Arg-388–Lys-392. A helical transmembrane segment spans residues Gly-393–Ile-413. The Extracellular portion of the chain corresponds to Tyr-414–Thr-415. A helical membrane pass occupies residues Tyr-416–Tyr-436. Topologically, residues Gln-437–Lys-450 are cytoplasmic. The helical transmembrane segment at Leu-451 to Gly-471 threads the bilayer. The Extracellular segment spans residues Thr-472–Arg-489. Residues Tyr-490–Phe-510 traverse the membrane as a helical segment. The Cytoplasmic segment spans residues Asp-511–Lys-840.

Belongs to the LPG synthase family.

Its subcellular location is the cell membrane. The catalysed reaction is L-lysyl-tRNA(Lys) + a 1,2-diacyl-sn-glycero-3-phospho-(1'-sn-glycerol) = a 1,2-diacyl-sn-glycero-3-phospho-1'-(3'-O-L-lysyl)-sn-glycerol + tRNA(Lys). Functionally, catalyzes the transfer of a lysyl group from L-lysyl-tRNA(Lys) to membrane-bound phosphatidylglycerol (PG), which produces lysylphosphatidylglycerol (LPG), a major component of the bacterial membrane with a positive net charge. LPG synthesis contributes to bacterial virulence as it is involved in the resistance mechanism against cationic antimicrobial peptides (CAMP) produces by the host's immune system (defensins, cathelicidins) and by the competing microorganisms (bacteriocins). In fact, the modification of anionic phosphatidylglycerol with positively charged L-lysine results in repulsion of the peptides. This Staphylococcus epidermidis (strain ATCC 12228 / FDA PCI 1200) protein is Phosphatidylglycerol lysyltransferase (mprF).